We begin with the raw amino-acid sequence, 581 residues long: Leucine-rich repeat-containing protein 15 (581 aa).

The first 21 residues, 1–21 (MPLKHYLLLLVGCQAWGAGLA), serve as a signal peptide directing secretion. In terms of domain architecture, LRRNT spans 22 to 53 (YHGCPSECTCSRASQVECTGARIVAVPTPLPW). Residues 22–538 (YHGCPSECTC…VWGMTQAQSG (517 aa)) lie on the Extracellular side of the membrane. LRR repeat units follow at residues 54 to 75 (NAMS…PFLN), 78 to 99 (ALIA…AFRN), 102 to 123 (SLRY…LFQG), 126 to 147 (SLES…HFSQ), 150 to 171 (NLKE…AFDH), 174 to 195 (GLTK…VFQH), 198 to 219 (NLQV…TFDG), 222 to 243 (NLQE…LFHN), 246 to 267 (NLQR…VFMQ), 270 to 291 (QLNR…IFGP), 294 to 315 (NLRE…VFSN), 318 to 339 (QLQV…AFNG), 342 to 363 (ELRE…VFRM), 366 to 387 (NLQN…IFAN), and 390 to 411 (GLMA…IFDH). Asparagine 75 is a glycosylation site (N-linked (GlcNAc...) asparagine). A glycan (N-linked (GlcNAc...) asparagine) is linked at asparagine 369. Residues 423 to 475 (NPWRCDSDILPLRNWLLLNQPRLGTDTVPVCFSPANVRGQSLIIINVNVAVPS) enclose the LRRCT domain. Residues 489 to 509 (WYPDTPSYPDTTSVSSTTELT) form a disordered region. The span at 499-509 (TTSVSSTTELT) shows a compositional bias: low complexity. Residues 539–559 (LAIAAIVIGIVALACSLAACV) traverse the membrane as a helical segment. Residues 560 to 581 (GCCCCKKRSQAVLMQMKAPNEC) are Cytoplasmic-facing.

In terms of assembly, (Microbial infection) Interacts with human coronavirus SARS-CoV-2 spike protein (via RBD domain); the interaction is direct and sequesters virions at the cell surface. (Microbial infection) Interacts with human coronavirus SARS-CoV-2 spike protein (via RBD domain); the interaction is direct. Expressed in brain and placenta. Expressed in lung fibroblasts. Expressed in chodrocytes.

Its subcellular location is the cell membrane. Functionally, (Microbial infection) Modulates the ability of SARS-CoV-2 to infect host cells through interaction with the spike protein. Does not act as a SARS-CoV-2 entry receptor but sequesters virions and antagonizes in trans SARS-CoV-2 infection of ACE2(+) cells when expressed on nearby cells. The chain is Leucine-rich repeat-containing protein 15 (LRRC15) from Homo sapiens (Human).